An 83-amino-acid polypeptide reads, in one-letter code: Large ribosomal subunit protein bL27c (83 aa).

Positions Met-1–Leu-21 are disordered.

The protein belongs to the bacterial ribosomal protein bL27 family.

Its subcellular location is the plastid. It is found in the chloroplast. This Phaeodactylum tricornutum (strain CCAP 1055/1) protein is Large ribosomal subunit protein bL27c.